The chain runs to 2358 residues: Cell wall alpha-1,3-glucan synthase mok13 (2358 aa).

Basic and acidic residues predominate over residues 1645–1659; the sequence is EGLENEENELKDKAP. The segment at 1645–1669 is disordered; that stretch reads EGLENEENELKDKAPPNEPNVGSLF.

The protein belongs to the glycosyltransferase group 1 family.

The catalysed reaction is [(1-&gt;3)-alpha-D-glucosyl](n) + UDP-alpha-D-glucose = [(1-&gt;3)-alpha-D-glucosyl](n+1) + UDP + H(+). The chain is Cell wall alpha-1,3-glucan synthase mok13 (mok13) from Schizosaccharomyces pombe (strain 972 / ATCC 24843) (Fission yeast).